Here is a 578-residue protein sequence, read N- to C-terminus: Proline--tRNA ligase (578 aa).

This sequence belongs to the class-II aminoacyl-tRNA synthetase family. ProS type 1 subfamily. In terms of assembly, homodimer.

It localises to the cytoplasm. It catalyses the reaction tRNA(Pro) + L-proline + ATP = L-prolyl-tRNA(Pro) + AMP + diphosphate. Functionally, catalyzes the attachment of proline to tRNA(Pro) in a two-step reaction: proline is first activated by ATP to form Pro-AMP and then transferred to the acceptor end of tRNA(Pro). As ProRS can inadvertently accommodate and process non-cognate amino acids such as alanine and cysteine, to avoid such errors it has two additional distinct editing activities against alanine. One activity is designated as 'pretransfer' editing and involves the tRNA(Pro)-independent hydrolysis of activated Ala-AMP. The other activity is designated 'posttransfer' editing and involves deacylation of mischarged Ala-tRNA(Pro). The misacylated Cys-tRNA(Pro) is not edited by ProRS. This chain is Proline--tRNA ligase, found in Burkholderia orbicola (strain AU 1054).